The chain runs to 422 residues: La-related protein 6A (422 aa).

Positions 1–94 are disordered; the sequence is MSSLPLRSGE…DHGENPVETD (94 aa). Residues 48-61 show a composition bias toward low complexity; sequence VTESSDDVVVNVSE. The segment covering 73–89 has biased composition (basic and acidic residues); sequence DHERNSGEDRDQDHGEN. The HTH La-type RNA-binding domain occupies 97 to 188; that stretch reads VVPIDELNQK…KRLSPLPEIR (92 aa). An RRM domain is found at 193-283; it reads FTVLVENLPE…NGLRVKLLEQ (91 aa). A disordered region spans residues 286 to 422; that stretch reads GKFAQRRPAR…PTSTQTSHEV (137 aa). A compositionally biased stretch (basic and acidic residues) spans 295–348; sequence RREVDKEKDTTGRVHDQTGGEKNKKTREHQNHRLHHSDNPADDDGGNHQKDKNG.

The protein localises to the nucleus. Transcriptional regulator. In Arabidopsis thaliana (Mouse-ear cress), this protein is La-related protein 6A (LARP6A).